The sequence spans 505 residues: Maturase K (505 aa).

The protein belongs to the intron maturase 2 family. MatK subfamily.

Its subcellular location is the plastid. The protein localises to the chloroplast. Its function is as follows. Usually encoded in the trnK tRNA gene intron. Probably assists in splicing its own and other chloroplast group II introns. The chain is Maturase K from Amaranthus greggii (Gregg's amaranth).